A 311-amino-acid chain; its full sequence is Phosphoribosylaminoimidazole-succinocarboxamide synthase (311 aa).

It belongs to the SAICAR synthetase family.

The enzyme catalyses 5-amino-1-(5-phospho-D-ribosyl)imidazole-4-carboxylate + L-aspartate + ATP = (2S)-2-[5-amino-1-(5-phospho-beta-D-ribosyl)imidazole-4-carboxamido]succinate + ADP + phosphate + 2 H(+). It functions in the pathway purine metabolism; IMP biosynthesis via de novo pathway; 5-amino-1-(5-phospho-D-ribosyl)imidazole-4-carboxamide from 5-amino-1-(5-phospho-D-ribosyl)imidazole-4-carboxylate: step 1/2. This Aromatoleum aromaticum (strain DSM 19018 / LMG 30748 / EbN1) (Azoarcus sp. (strain EbN1)) protein is Phosphoribosylaminoimidazole-succinocarboxamide synthase.